The sequence spans 382 residues: Chaperone protein DnaJ (382 aa).

Positions D5–G70 constitute a J domain. The CR-type zinc finger occupies G137–T215. Zn(2+) contacts are provided by C150, C153, C167, C170, C189, C192, C203, and C206. CXXCXGXG motif repeat units follow at residues C150 to G157, C167 to G174, C189 to G196, and C203 to G210.

Belongs to the DnaJ family. As to quaternary structure, homodimer. It depends on Zn(2+) as a cofactor.

The protein localises to the cytoplasm. Its function is as follows. Participates actively in the response to hyperosmotic and heat shock by preventing the aggregation of stress-denatured proteins and by disaggregating proteins, also in an autonomous, DnaK-independent fashion. Unfolded proteins bind initially to DnaJ; upon interaction with the DnaJ-bound protein, DnaK hydrolyzes its bound ATP, resulting in the formation of a stable complex. GrpE releases ADP from DnaK; ATP binding to DnaK triggers the release of the substrate protein, thus completing the reaction cycle. Several rounds of ATP-dependent interactions between DnaJ, DnaK and GrpE are required for fully efficient folding. Also involved, together with DnaK and GrpE, in the DNA replication of plasmids through activation of initiation proteins. In Enterobacter sp. (strain 638), this protein is Chaperone protein DnaJ.